Reading from the N-terminus, the 87-residue chain is MQASDRFNINSQLEHLQAKYVGTGHADLSRFEWTVNIQRDSYASYIGHYPMLSYFAIAENESIGRERYNFMQKMLLPCGLPPEREDE.

Belongs to the SF3B5 family.

This is an uncharacterized protein from Arabidopsis thaliana (Mouse-ear cress).